The chain runs to 402 residues: Zinc finger CCHC domain-containing protein 12 (402 aa).

The interval 308-341 (IDSPHNSRAQFPSTSGGSGYKNNGPGEMRRARKR) is disordered. Residues 311 to 322 (PHNSRAQFPSTS) show a composition bias toward polar residues. The CCHC-type zinc finger occupies 345-362 (IRCSYCGEEGHSKETCDN).

Belongs to the ZCCHC12 family. In terms of assembly, interacts with SMAD1 and CREB-binding protein (CBP). Forms a protein-DNA complex through its association with SMAD1.

In terms of biological role, transcriptional coactivator in the bone morphogenetic protein (BMP)-signaling pathway. It positively modulates BMP signaling by interacting with SMAD1 and associating with CBP in the transcription complex. It contributes to the BMP-induced enhancement of cholinergic-neuron-specific gene expression. The protein is Zinc finger CCHC domain-containing protein 12 (ZCCHC12) of Homo sapiens (Human).